The primary structure comprises 104 residues: Glutaredoxin 1 (104 aa).

The Glutaredoxin domain occupies 1 to 96 (MNKSILHTII…KLLETQPKNK (96 aa)). Residues Cys17 and Cys20 are joined by a disulfide bond.

Belongs to the glutaredoxin family. As to quaternary structure, monomer.

It is found in the cytoplasm. In terms of biological role, has a glutathione-disulfide oxidoreductase activity in the presence of NADPH and glutathione reductase. Reduces low molecular weight disulfides and proteins. The sequence is that of Glutaredoxin 1 (grxC1) from Rickettsia typhi (strain ATCC VR-144 / Wilmington).